Here is a 409-residue protein sequence, read N- to C-terminus: Nucleoprotein (409 aa).

Disordered regions lie at residues 1 to 64 (MSAG…SNVK) and 167 to 197 (RNSSAVTSRENSRPGSRDSSRGRQRSRVDDD). The tract at residues 30-161 (GTGQASWFQS…NNYRWDFIAL (132 aa)) is RNA-binding. Residues 32-157 (GQASWFQSLK…GGPDNNYRWD (126 aa)) enclose the CoV N NTD domain. The segment covering 176–197 (ENSRPGSRDSSRGRQRSRVDDD) has biased composition (basic and acidic residues). A Phosphoserine; by host modification is found at Ser-192. In terms of domain architecture, CoV N CTD spans 217 to 333 (SKQKANEMAE…ECVDGVGTRP (117 aa)). A dimerization region spans residues 228 to 335 (KYHKRAIAPG…VDGVGTRPKD (108 aa)). Cys-322 and Cys-325 are oxidised to a cystine. The interval 327–409 (DGVGTRPKDD…GEGAFDDINI (83 aa)) is disordered. The span at 332–349 (RPKDDPTPRSRAASKDRN) shows a compositional bias: basic and acidic residues. Thr-374 is subject to Phosphothreonine; by host.

This sequence belongs to the gammacoronavirus nucleocapsid protein family. In terms of assembly, homooligomer. Both monomeric and oligomeric forms interact with RNA. Interacts with protein M. Interacts with NSP3; this interaction serves to tether the genome to the newly translated replicase-transcriptase complex at a very early stage of infection. ADP-ribosylated. The ADP-ribosylation is retained in the virion during infection. In terms of processing, phosphorylated on serine and threonine residues.

It localises to the virion. It is found in the host endoplasmic reticulum-Golgi intermediate compartment. Its subcellular location is the host Golgi apparatus. Packages the positive strand viral genome RNA into a helical ribonucleocapsid (RNP) and plays a fundamental role during virion assembly through its interactions with the viral genome and membrane protein M. Plays an important role in enhancing the efficiency of subgenomic viral RNA transcription as well as viral replication. The polypeptide is Nucleoprotein (Gallus gallus (Chicken)).